Reading from the N-terminus, the 674-residue chain is Probable copper-transporting P-type ATPase B (674 aa).

The disordered stretch occupies residues 1-22 (MNHSNQMHHDNHESHNHHSGHA). The segment covering 7–16 (MHHDNHESHN) has biased composition (basic and acidic residues). Helical transmembrane passes span 32-52 (FFVS…MGVN), 57-77 (FTFP…FFYG), 95-115 (GMMT…LYAF), 127-147 (TMDF…GHWI), 284-304 (GYLF…WMLI), and 315-335 (LVTV…PLVT). Catalysis depends on Asp-367, which acts as the 4-aspartylphosphate intermediate. Mg(2+) is bound by residues Asp-565 and Asp-569. A run of 2 helical transmembrane segments spans residues 623-645 (LWWG…AFIG) and 649-671 (SPAI…AFTL).

Belongs to the cation transport ATPase (P-type) (TC 3.A.3) family. Type IB subfamily.

It localises to the cell membrane. The catalysed reaction is Cu(+)(in) + ATP + H2O = Cu(+)(out) + ADP + phosphate + H(+). Involved in copper transport. The protein is Probable copper-transporting P-type ATPase B (copB) of Staphylococcus epidermidis (strain ATCC 35984 / DSM 28319 / BCRC 17069 / CCUG 31568 / BM 3577 / RP62A).